The primary structure comprises 733 residues: DNA-binding protein SATB2 (733 aa).

Positions 1 to 47 (MERRSESPCLRDSPDRRSGSPDVKGPPPVKVARLEQNGSPMGARGRP) are disordered. At serine 20 the chain carries Phosphoserine. Residues lysine 24 and lysine 30 each participate in a glycyl lysine isopeptide (Lys-Gly) (interchain with G-Cter in SUMO2) cross-link. A Phosphoserine modification is found at serine 39. The region spanning 57-158 (GLMIPVFCVV…VVTLKIQLQS (102 aa)) is the CMP domain. Lysine 161 participates in a covalent cross-link: Glycyl lysine isopeptide (Lys-Gly) (interchain with G-Cter in SUMO2). Residues 161–234 (KLEDLPAEQW…WYKKYKKIKV (74 aa)) form the CUTL domain. A Glycyl lysine isopeptide (Lys-Gly) (interchain with G-Cter in SUMO) cross-link involves residue lysine 233. A Glycyl lysine isopeptide (Lys-Gly) (interchain with G-Cter in SUMO); alternate cross-link involves residue lysine 350. Lysine 350 participates in a covalent cross-link: Glycyl lysine isopeptide (Lys-Gly) (interchain with G-Cter in SUMO2); alternate. A DNA-binding region (CUT 1) is located at residues 350–437 (KPEPTNSSVE…ERDRIYQDER (88 aa)). A disordered region spans residues 435-473 (DERERSMNPNVSMVSSASSSPSSSRTPQAKTSTPTTDLP). The span at 441 to 458 (MNPNVSMVSSASSSPSSS) shows a compositional bias: low complexity. The residue at position 454 (serine 454) is a Phosphoserine. Over residues 459–470 (RTPQAKTSTPTT) the composition is skewed to polar residues. Threonine 467 carries the phosphothreonine modification. Positions 473–560 (PIKVDGANVN…ERDVIYEEES (88 aa)) form a DNA-binding region, CUT 2. Lysine 475 is covalently cross-linked (Glycyl lysine isopeptide (Lys-Gly) (interchain with G-Cter in SUMO2)). 2 disordered regions span residues 580–617 (QVLHRQQSQPTKESSPPREEAPPPPPPTEDSCAKKPRS) and 691–733 (DEEL…TDQR). Serine 594 is modified (phosphoserine). The segment at residues 615-674 (PRSRTKISLEALGILQSFIHDVGLYPDQEAIHTLSAQLDLPKHTIIKFFQNQRYHVKHHG) is a DNA-binding region (homeobox). The segment covering 694–708 (LLTESEENDSEEGSE) has biased composition (acidic residues). Over residues 709–733 (EMYKVEAEEENADKSKAAPAETDQR) the composition is skewed to basic and acidic residues. Lysine 724 is covalently cross-linked (Glycyl lysine isopeptide (Lys-Gly) (interchain with G-Cter in SUMO2)).

Belongs to the CUT homeobox family. Interacts with PIAS1. Interacts with ATF4 and RUNX2; resulting in enhanced DNA binding and transactivation by these transcription factors. In terms of processing, sumoylated by PIAS1. Sumoylation promotes nuclear localization, but represses transcription factor activity. In terms of tissue distribution, expressed in cortical neurons that extend axons across the corpus callosum. Also expressed in branchial arches and in cells of the osteoblast lineage, but not in chondrocytes and osteoclasts.

The protein resides in the nucleus matrix. Its function is as follows. Binds to DNA, at nuclear matrix- or scaffold-associated regions. Thought to recognize the sugar-phosphate structure of double-stranded DNA. Transcription factor controlling nuclear gene expression, by binding to matrix attachment regions (MARs) of DNA and inducing a local chromatin-loop remodeling. Acts as a docking site for several chromatin remodeling enzymes and also by recruiting corepressors (HDACs) or coactivators (HATs) directly to promoters and enhancers. Required for the initiation of the upper-layer neurons (UL1) specific genetic program and for the inactivation of deep-layer neurons (DL) and UL2 specific genes, probably by modulating Bcl11b expression. Repressor of Ctip2 and regulatory determinant of corticocortical connections in the developing cerebral cortex. May play an important role in palate formation. Acts as a molecular node in a transcriptional network regulating skeletal development and osteoblast differentiation. The chain is DNA-binding protein SATB2 (Satb2) from Mus musculus (Mouse).